We begin with the raw amino-acid sequence, 140 residues long: Phosphoribosyl-AMP cyclohydrolase (140 aa).

Asp84 serves as a coordination point for Mg(2+). Zn(2+) is bound at residue Cys85. Positions 86 and 88 each coordinate Mg(2+). 2 residues coordinate Zn(2+): Cys101 and Cys108.

It belongs to the PRA-CH family. As to quaternary structure, homodimer. The cofactor is Mg(2+). Requires Zn(2+) as cofactor.

Its subcellular location is the cytoplasm. It catalyses the reaction 1-(5-phospho-beta-D-ribosyl)-5'-AMP + H2O = 1-(5-phospho-beta-D-ribosyl)-5-[(5-phospho-beta-D-ribosylamino)methylideneamino]imidazole-4-carboxamide. Its pathway is amino-acid biosynthesis; L-histidine biosynthesis; L-histidine from 5-phospho-alpha-D-ribose 1-diphosphate: step 3/9. Functionally, catalyzes the hydrolysis of the adenine ring of phosphoribosyl-AMP. In Chloroherpeton thalassium (strain ATCC 35110 / GB-78), this protein is Phosphoribosyl-AMP cyclohydrolase.